The following is a 539-amino-acid chain: Serine/threonine-protein kinase BUR1 (539 aa).

The segment covering 1-15 has biased composition (polar residues); that stretch reads MEKLSETTPNGTSPR. Positions 1 to 27 are disordered; that stretch reads MEKLSETTPNGTSPRTFALNHSRPRSS. One can recognise a Protein kinase domain in the interval 37-339; that stretch reads YELLGKLGEG…AVDALQHPWF (303 aa). ATP is bound by residues 43-51 and lysine 66; that span reads LGEGTFGEV. Catalysis depends on aspartate 169, which acts as the Proton acceptor. Residues 370-539 form a disordered region; that stretch reads AALPPAPKGG…DRPDHNGYRR (170 aa). 3 stretches are compositionally biased toward basic and acidic residues: residues 414–428, 471–514, and 521–539; these read NGPD…RERG, NRDD…DRGT, and PRHD…GYRR.

It belongs to the protein kinase superfamily. CMGC Ser/Thr protein kinase family. CDC2/CDKX subfamily.

It is found in the nucleus. The catalysed reaction is L-seryl-[protein] + ATP = O-phospho-L-seryl-[protein] + ADP + H(+). The enzyme catalyses L-threonyl-[protein] + ATP = O-phospho-L-threonyl-[protein] + ADP + H(+). It carries out the reaction [DNA-directed RNA polymerase] + ATP = phospho-[DNA-directed RNA polymerase] + ADP + H(+). Functionally, serine/threonine-protein kinase involved in transcription regulation. Phosphorylates the UBC2/RAD6 ubiquitin-conjugating enzyme (E2), leading to monoubiquitination of histone H2B and the silencing of telomeric-associated genes. Also required for histone H3 methylation. Necessary for the recovery from pheromone-induced growth arrest in the cell cycle G1 phase. In Gibberella zeae (strain ATCC MYA-4620 / CBS 123657 / FGSC 9075 / NRRL 31084 / PH-1) (Wheat head blight fungus), this protein is Serine/threonine-protein kinase BUR1 (BUR1).